Reading from the N-terminus, the 513-residue chain is Maturase K (513 aa).

The protein belongs to the intron maturase 2 family. MatK subfamily.

The protein localises to the plastid. The protein resides in the chloroplast. Its function is as follows. Usually encoded in the trnK tRNA gene intron. Probably assists in splicing its own and other chloroplast group II introns. In Keckiella cordifolia (Heart-leafed penstemon), this protein is Maturase K.